Consider the following 322-residue polypeptide: tRNA-dihydrouridine synthase B (322 aa).

FMN contacts are provided by residues 16–18 (PMA) and Gln-70. Catalysis depends on Cys-100, which acts as the Proton donor. FMN-binding positions include Lys-139, 200-202 (NGD), and 224-225 (GR).

This sequence belongs to the Dus family. DusB subfamily. FMN serves as cofactor.

The catalysed reaction is a 5,6-dihydrouridine in tRNA + NAD(+) = a uridine in tRNA + NADH + H(+). It catalyses the reaction a 5,6-dihydrouridine in tRNA + NADP(+) = a uridine in tRNA + NADPH + H(+). Functionally, catalyzes the synthesis of 5,6-dihydrouridine (D), a modified base found in the D-loop of most tRNAs, via the reduction of the C5-C6 double bond in target uridines. The chain is tRNA-dihydrouridine synthase B from Vibrio parahaemolyticus serotype O3:K6 (strain RIMD 2210633).